A 116-amino-acid polypeptide reads, in one-letter code: Ribonuclease P protein component (116 aa).

It belongs to the RnpA family. Consists of a catalytic RNA component (M1 or rnpB) and a protein subunit.

It carries out the reaction Endonucleolytic cleavage of RNA, removing 5'-extranucleotides from tRNA precursor.. In terms of biological role, RNaseP catalyzes the removal of the 5'-leader sequence from pre-tRNA to produce the mature 5'-terminus. It can also cleave other RNA substrates such as 4.5S RNA. The protein component plays an auxiliary but essential role in vivo by binding to the 5'-leader sequence and broadening the substrate specificity of the ribozyme. This chain is Ribonuclease P protein component, found in Bacillus velezensis (strain DSM 23117 / BGSC 10A6 / LMG 26770 / FZB42) (Bacillus amyloliquefaciens subsp. plantarum).